The following is a 66-amino-acid chain: Toxin Cll1 (66 aa).

Residues 1–66 enclose the LCN-type CS-alpha/beta domain; the sequence is KEGYLVNKST…TYPLPNKSCS (66 aa). 4 disulfides stabilise this stretch: cysteine 12-cysteine 65, cysteine 16-cysteine 41, cysteine 25-cysteine 46, and cysteine 29-cysteine 48.

This sequence belongs to the long (4 C-C) scorpion toxin superfamily. Sodium channel inhibitor family. Beta subfamily. As to expression, expressed by the venom gland.

It is found in the secreted. Functionally, beta toxin that binds site-4 of sodium channels (Nav) and reduces peak current (observed on Nav1.1/SCN1A, Nav1.2/SCN2A, Nav1.3/SCN3A, Nav1.4/SCN5A, Nav1.5/SCN4A, and Nav1.6/SCN8A (IC(50)=44.9 nM)), shifts the voltage of activation toward more negative potentials (observed on Nav1.6, Nav1.1 (weak), Nav1.2 (weak), and Nav1.7 (weak)), and induces resurgent currents at negative voltages following brief and strong depolarizations (observed on Nav1.6, Nav1.1 (weak), Nav1.2 (weak), and Nav1.4 (weak)). This toxin is only active on crustaceans. The polypeptide is Toxin Cll1 (Centruroides limpidus (Mexican scorpion)).